A 978-amino-acid chain; its full sequence is Glycine dehydrogenase (decarboxylating) (978 aa).

K726 carries the N6-(pyridoxal phosphate)lysine modification.

It belongs to the GcvP family. In terms of assembly, the glycine cleavage system is composed of four proteins: P, T, L and H. Pyridoxal 5'-phosphate is required as a cofactor.

It carries out the reaction N(6)-[(R)-lipoyl]-L-lysyl-[glycine-cleavage complex H protein] + glycine + H(+) = N(6)-[(R)-S(8)-aminomethyldihydrolipoyl]-L-lysyl-[glycine-cleavage complex H protein] + CO2. The glycine cleavage system catalyzes the degradation of glycine. The P protein binds the alpha-amino group of glycine through its pyridoxal phosphate cofactor; CO(2) is released and the remaining methylamine moiety is then transferred to the lipoamide cofactor of the H protein. The chain is Glycine dehydrogenase (decarboxylating) from Paraburkholderia xenovorans (strain LB400).